Here is a 73-residue protein sequence, read N- to C-terminus: uncharacterized protein (73 aa).

The protein belongs to the asfivirus DP63R family.

This is an uncharacterized protein from Ornithodoros (relapsing fever ticks).